A 432-amino-acid chain; its full sequence is Fibrinogen gamma chain (432 aa).

The signal sequence occupies residues 1–24; the sequence is MGRIGTPVFLAFLSALTCSLQVHA. One can recognise a Fibrinogen C-terminal domain in the interval 169–412; sequence KISPITGKDC…MTTMKLLPMG (244 aa). A disulfide bridge connects residues C178 and C207. Residue N227 is glycosylated (N-linked (GlcNAc...) asparagine). Residues D340, D342, Y344, and G346 each contribute to the Ca(2+) site. An intrachain disulfide couples C348 to C361. The segment at 413–432 is disordered; sequence RDLSGHGGQQQSKGNSRGDN. The span at 421 to 432 shows a compositional bias: polar residues; the sequence is QQQSKGNSRGDN.

Heterohexamer; disulfide linked. Contains 2 sets of 3 non-identical chains (alpha, beta and gamma). The 2 heterotrimers are in head to head conformation with the N-termini in a small central domain. Conversion of fibrinogen to fibrin is triggered by thrombin, which cleaves fibrinopeptides A and B from alpha and beta chains, and thus exposes the N-terminal polymerization sites responsible for the formation of the soft clot. The soft clot is converted into the hard clot by factor XIIIA which catalyzes the epsilon-(gamma-glutamyl)lysine cross-linking between gamma chains (stronger) and between alpha chains (weaker) of different monomers.

It localises to the secreted. Functionally, together with fibrinogen alpha (FGA) and fibrinogen beta (FGB), polymerizes to form an insoluble fibrin matrix. Has a major function in hemostasis as one of the primary components of blood clots. The protein is Fibrinogen gamma chain (FGG) of Petromyzon marinus (Sea lamprey).